A 154-amino-acid polypeptide reads, in one-letter code: Prefoldin subunit alpha (154 aa).

The protein belongs to the prefoldin alpha subunit family. In terms of assembly, heterohexamer of two alpha and four beta subunits.

The protein localises to the cytoplasm. Its function is as follows. Molecular chaperone capable of stabilizing a range of proteins. Seems to fulfill an ATP-independent, HSP70-like function in archaeal de novo protein folding. The protein is Prefoldin subunit alpha of Hyperthermus butylicus (strain DSM 5456 / JCM 9403 / PLM1-5).